The sequence spans 261 residues: Ribosome biogenesis protein NSA2 (261 aa).

Composition is skewed to basic and acidic residues over residues 1–22 (MPQN…DHDE) and 49–74 (LYAE…RNVK). Residues 1–84 (MPQNEYIERW…TSEPAEPSTE (84 aa)) form a disordered region. Residues 15 to 22 (GKRFDHDE) carry the Nuclear localization signal motif.

This sequence belongs to the eukaryotic ribosomal protein eS8 family. Ribosome biogenesis protein NSA2 subfamily. Component of the pre-66S ribosomal particle. Interacts with NOP7 and RRP1. Interacts with RSA4 (via WD repeats).

Its subcellular location is the nucleus. It localises to the nucleolus. Its function is as follows. Involved in the biogenesis of the 60S ribosomal subunit. May play a part in the quality control of pre-60S particles. The chain is Ribosome biogenesis protein NSA2 (NSA2) from Phaeosphaeria nodorum (strain SN15 / ATCC MYA-4574 / FGSC 10173) (Glume blotch fungus).